Here is a 467-residue protein sequence, read N- to C-terminus: Indoleacetamide hydrolase (467 aa).

Active-site charge relay system residues include K74 and S149. The active-site Acyl-ester intermediate is the S173.

It belongs to the amidase family.

The protein operates within plant hormone metabolism; auxin biosynthesis. Its function is as follows. Hydrolyzes indole-3-acetamide (IAM) into indole-3-acetic acid (IAA). This is Indoleacetamide hydrolase (tms2) from Rhizobium radiobacter (Agrobacterium tumefaciens).